A 67-amino-acid polypeptide reads, in one-letter code: LPS-assembly lipoprotein LptM (67 aa).

Residues 1–19 (MKNVFKTLAVLLTLFSLTG) form the signal peptide. Cys20 carries the N-palmitoyl cysteine lipid modification. A lipid anchor (S-diacylglycerol cysteine) is attached at Cys20. The tract at residues 26-67 (LYFPPADKNAPPPTKKVDSQTQSTMPDKNDRATGDGPSQVNY) is disordered.

This sequence belongs to the LptM family. In terms of assembly, interacts with the outer membrane embedded portion of the LPS translocon formed by LptD and LptE (LptDE).

The protein localises to the cell outer membrane. In terms of biological role, component of the lipopolysaccharide (LPS) transport (Lpt) pathway that promotes efficient assembly of the outer membrane LPS translocon (LptDE) by the BAM complex. Facilitates oxidative maturation of LptD by stabilizing a conformation of the LPS translocon in which LptD can efficiently acquire native disulfide bonds, thereby activating the LPS translocon. The sequence is that of LPS-assembly lipoprotein LptM from Salmonella typhi.